The primary structure comprises 155 residues: Probable tellurium resistance transcriptional regulator TerW (155 aa).

In terms of biological role, involved in tellurite resistance. TerW binds specifically to the potential promoter region of the terZABCDE operon and probably regulates expression of the genes. The polypeptide is Probable tellurium resistance transcriptional regulator TerW (Escherichia coli).